The primary structure comprises 157 residues: Protein E6 (157 aa).

Zinc fingers lie at residues 41–77 (CNFCGKFLNYLEACEFDYKKLSLIWKDYCVFACCRVC) and 114–150 (CQTCLAFLDIIEKLDCCGRGLPFHKVRNAWKGICRQC).

It belongs to the papillomaviridae E6 protein family. Forms homodimers. Interacts with ubiquitin-protein ligase UBE3A/E6-AP; this interaction stimulates UBE3A ubiquitin activity. Interacts with host BAK1.

It localises to the host cytoplasm. Its subcellular location is the host nucleus. Plays a major role in the induction and maintenance of cellular transformation. E6 associates with host UBE3A/E6-AP ubiquitin-protein ligase and modulates its activity. Protects host keratinocytes from apoptosis by mediating the degradation of host BAK1. May also inhibit host immune response. The polypeptide is Protein E6 (Human papillomavirus type 5b).